The primary structure comprises 381 residues: Cobalt-precorrin-5B C(1)-methyltransferase (381 aa).

It belongs to the CbiD family.

It carries out the reaction Co-precorrin-5B + S-adenosyl-L-methionine = Co-precorrin-6A + S-adenosyl-L-homocysteine. It functions in the pathway cofactor biosynthesis; adenosylcobalamin biosynthesis; cob(II)yrinate a,c-diamide from sirohydrochlorin (anaerobic route): step 6/10. In terms of biological role, catalyzes the methylation of C-1 in cobalt-precorrin-5B to form cobalt-precorrin-6A. The polypeptide is Cobalt-precorrin-5B C(1)-methyltransferase (Prochlorococcus marinus (strain SARG / CCMP1375 / SS120)).